Reading from the N-terminus, the 88-residue chain is Small ribosomal subunit protein uS17 (88 aa).

Belongs to the universal ribosomal protein uS17 family. Part of the 30S ribosomal subunit.

Functionally, one of the primary rRNA binding proteins, it binds specifically to the 5'-end of 16S ribosomal RNA. This Hahella chejuensis (strain KCTC 2396) protein is Small ribosomal subunit protein uS17.